The sequence spans 337 residues: ATP-dependent 6-phosphofructokinase (337 aa).

Gly-11 provides a ligand contact to ATP. Arg-21 to Arg-25 is an ADP binding site. ATP contacts are provided by residues Arg-72–Tyr-73 and Gly-102–Ser-105. Residue Asp-103 participates in Mg(2+) binding. Thr-125–Asp-127 is a binding site for substrate. The active-site Proton acceptor is the Asp-127. Arg-154 serves as a coordination point for ADP. Residues Arg-162 and Met-169–Arg-171 each bind substrate. Residues Gly-185–Asp-187, Arg-212, and Lys-214–His-216 each bind ADP. Substrate is bound by residues Glu-223, Arg-245, and His-251 to Arg-254.

This sequence belongs to the phosphofructokinase type A (PFKA) family. ATP-dependent PFK group I subfamily. Prokaryotic clade 'B1' sub-subfamily. Homotetramer. It depends on Mg(2+) as a cofactor.

It is found in the cytoplasm. The catalysed reaction is beta-D-fructose 6-phosphate + ATP = beta-D-fructose 1,6-bisphosphate + ADP + H(+). The protein operates within carbohydrate degradation; glycolysis; D-glyceraldehyde 3-phosphate and glycerone phosphate from D-glucose: step 3/4. Its activity is regulated as follows. Allosterically activated by ADP and other diphosphonucleosides, and allosterically inhibited by phosphoenolpyruvate. Functionally, catalyzes the phosphorylation of D-fructose 6-phosphate to fructose 1,6-bisphosphate by ATP, the first committing step of glycolysis. The protein is ATP-dependent 6-phosphofructokinase of Streptococcus equi subsp. equi (strain 4047).